We begin with the raw amino-acid sequence, 172 residues long: Ribosome maturation factor RimP (172 aa).

It belongs to the RimP family.

It localises to the cytoplasm. Required for maturation of 30S ribosomal subunits. This Chlorobium phaeovibrioides (strain DSM 265 / 1930) (Prosthecochloris vibrioformis (strain DSM 265)) protein is Ribosome maturation factor RimP.